A 346-amino-acid chain; its full sequence is FAS-associated factor 2 (346 aa).

N6-acetyllysine is present on Lys68. Residues 176-251 are a coiled coil; sequence SERLEREERN…EEKERKLECL (76 aa). The segment at 200 to 262 is disordered; sequence ASLRADQEKE…PEPSPDDPDS (63 aa). Basic and acidic residues predominate over residues 204-249; sequence ADQEKERKKREERERKRRKEEEVQQQKLAEERRRQNLQEEKERKLE. The 83-residue stretch at 258-340 folds into the UBX domain; sequence DDPDSVKIIF…GLSHTEVLFV (83 aa).

In terms of assembly, identified in a complex that contains SEL1L, OS9, FAF2/UBXD8, UBE2J1/UBC6E and AUP1. Interacts with YOD1. Interacts (via N-terminus) with UBQLN2 (via C-terminus). Interacts with PNPLA2 and UBAC2. Interacts with ZFAND2B; probably through VCP. Interacts with LMBR1L.

Its subcellular location is the cytoplasm. The protein resides in the lipid droplet. It localises to the endoplasmic reticulum. Its function is as follows. Plays an important role in endoplasmic reticulum-associated degradation (ERAD) that mediates ubiquitin-dependent degradation of misfolded endoplasmic reticulum proteins. By controlling the steady-state expression of the IGF1R receptor, indirectly regulates the insulin-like growth factor receptor signaling pathway. Involved in inhibition of lipid droplet degradation by binding to phospholipase PNPL2 and inhibiting its activity by promoting dissociation of PNPL2 from its endogenous activator, ABHD5 which inhibits the rate of triacylglycerol hydrolysis. Involved in stress granule disassembly: associates with ubiquitinated G3BP1 in response to heat shock, thereby promoting interaction between ubiquitinated G3BP1 and VCP, followed by G3BP1 extraction from stress granules and stress granule disassembly. The chain is FAS-associated factor 2 (Faf2) from Rattus norvegicus (Rat).